Here is a 110-residue protein sequence, read N- to C-terminus: Phosphoribosyl-ATP pyrophosphatase (110 aa).

The protein belongs to the PRA-PH family.

The protein localises to the cytoplasm. The catalysed reaction is 1-(5-phospho-beta-D-ribosyl)-ATP + H2O = 1-(5-phospho-beta-D-ribosyl)-5'-AMP + diphosphate + H(+). Its pathway is amino-acid biosynthesis; L-histidine biosynthesis; L-histidine from 5-phospho-alpha-D-ribose 1-diphosphate: step 2/9. The sequence is that of Phosphoribosyl-ATP pyrophosphatase from Pseudomonas syringae pv. syringae (strain B728a).